The primary structure comprises 145 residues: D-aminoacyl-tRNA deacylase (145 aa).

The Gly-cisPro motif, important for rejection of L-amino acids motif lies at 137–138; it reads GP.

Belongs to the DTD family. In terms of assembly, homodimer.

It is found in the cytoplasm. It catalyses the reaction glycyl-tRNA(Ala) + H2O = tRNA(Ala) + glycine + H(+). The enzyme catalyses a D-aminoacyl-tRNA + H2O = a tRNA + a D-alpha-amino acid + H(+). Its function is as follows. An aminoacyl-tRNA editing enzyme that deacylates mischarged D-aminoacyl-tRNAs. Also deacylates mischarged glycyl-tRNA(Ala), protecting cells against glycine mischarging by AlaRS. Acts via tRNA-based rather than protein-based catalysis; rejects L-amino acids rather than detecting D-amino acids in the active site. By recycling D-aminoacyl-tRNA to D-amino acids and free tRNA molecules, this enzyme counteracts the toxicity associated with the formation of D-aminoacyl-tRNA entities in vivo and helps enforce protein L-homochirality. The polypeptide is D-aminoacyl-tRNA deacylase (Yersinia enterocolitica serotype O:8 / biotype 1B (strain NCTC 13174 / 8081)).